A 527-amino-acid polypeptide reads, in one-letter code: MASDFLPVRRALLSVSDKTGLIDLARALVARNVELLSTGGTAKAIRDAGLPVKDVAELTGFPEMMDGRVKTLHPLVHGGLLGRAGVDEAVMAEHGIAPIDLLVLNLYPFESVTAKADCTLADAVENIDIGGPAMLRSAAKNFARVAVATDPAQYADLLAELEANNGQLSAAQRFALSVAAFNRVAQYDAAISNYLSAVADSAESVPTRSPFPAQINSNFIKVMDLRYGENPHQSGAFYRDLYPVPGTLATFQQLQGKELSYNNLADADAAWECVRQFDAPACVIVKHANPCGVAVGVACGDAYELAYATDPTSAFGGILAFNRTLDAATAKAILDRQFVEVLIAPDYEPGALDYATKKANVRVLKIPHGAGLNNYDTKRIGSGLLMQSADNRGMSLGELSVVTKRAPSDAELADLLFAWRVAKYVKSNAIVYAKDSRTIGVGAGQMSRVVSAKIAALKAEEAKLTVAGSVMASDAFFPFRDGIDAAAAAGIQAVIQPGGSMRDGEVIAAADEHGLAMVFTGVRHFRH.

An MGS-like domain is found at 1 to 149 (MASDFLPVRR…KNFARVAVAT (149 aa)).

It belongs to the PurH family.

The enzyme catalyses (6R)-10-formyltetrahydrofolate + 5-amino-1-(5-phospho-beta-D-ribosyl)imidazole-4-carboxamide = 5-formamido-1-(5-phospho-D-ribosyl)imidazole-4-carboxamide + (6S)-5,6,7,8-tetrahydrofolate. The catalysed reaction is IMP + H2O = 5-formamido-1-(5-phospho-D-ribosyl)imidazole-4-carboxamide. The protein operates within purine metabolism; IMP biosynthesis via de novo pathway; 5-formamido-1-(5-phospho-D-ribosyl)imidazole-4-carboxamide from 5-amino-1-(5-phospho-D-ribosyl)imidazole-4-carboxamide (10-formyl THF route): step 1/1. It participates in purine metabolism; IMP biosynthesis via de novo pathway; IMP from 5-formamido-1-(5-phospho-D-ribosyl)imidazole-4-carboxamide: step 1/1. This Xanthomonas campestris pv. campestris (strain 8004) protein is Bifunctional purine biosynthesis protein PurH.